Consider the following 158-residue polypeptide: Xanthine-guanine phosphoribosyltransferase (158 aa).

Residues 38–39 (RG) and 90–98 (DDLVDTGGT) each bind 5-phospho-alpha-D-ribose 1-diphosphate. Asp-91 serves as a coordination point for Mg(2+). Residues Asp-94 and Ile-137 each coordinate guanine. 2 residues coordinate xanthine: Asp-94 and Ile-137. Residues 94–98 (DTGGT) and 136–137 (WI) each bind GMP.

Belongs to the purine/pyrimidine phosphoribosyltransferase family. XGPT subfamily. Homotetramer. It depends on Mg(2+) as a cofactor.

It localises to the cell inner membrane. The catalysed reaction is GMP + diphosphate = guanine + 5-phospho-alpha-D-ribose 1-diphosphate. It catalyses the reaction XMP + diphosphate = xanthine + 5-phospho-alpha-D-ribose 1-diphosphate. The enzyme catalyses IMP + diphosphate = hypoxanthine + 5-phospho-alpha-D-ribose 1-diphosphate. It participates in purine metabolism; GMP biosynthesis via salvage pathway; GMP from guanine: step 1/1. The protein operates within purine metabolism; XMP biosynthesis via salvage pathway; XMP from xanthine: step 1/1. Its function is as follows. Purine salvage pathway enzyme that catalyzes the transfer of the ribosyl-5-phosphate group from 5-phospho-alpha-D-ribose 1-diphosphate (PRPP) to the N9 position of the 6-oxopurines guanine and xanthine to form the corresponding ribonucleotides GMP (guanosine 5'-monophosphate) and XMP (xanthosine 5'-monophosphate), with the release of PPi. To a lesser extent, also acts on hypoxanthine. The chain is Xanthine-guanine phosphoribosyltransferase from Buchnera aphidicola subsp. Acyrthosiphon pisum (strain APS) (Acyrthosiphon pisum symbiotic bacterium).